The chain runs to 1088 residues: RNA-directed RNA polymerase (1088 aa).

The 187-residue stretch at 501–687 (LSYGDVTRFL…AKRYIAGGKI (187 aa)) folds into the RdRp catalytic domain.

This sequence belongs to the reoviridae RNA-directed RNA polymerase family. In terms of assembly, interacts with VP3 (Potential). Interacts with VP2; this interaction activates VP1. Interacts with NSP5; this interaction is probably necessary for the formation of functional virus factories. Interacts with NSP2; this interaction is weak. Mg(2+) serves as cofactor.

It is found in the virion. It catalyses the reaction RNA(n) + a ribonucleoside 5'-triphosphate = RNA(n+1) + diphosphate. In terms of biological role, RNA-directed RNA polymerase that is involved in both transcription and genome replication. Together with VP3 capping enzyme, forms an enzyme complex positioned near the channels situated at each of the five-fold vertices of the core. Following infection, the outermost layer of the virus is lost, leaving a double-layered particle (DLP) made up of the core and VP6 shell. VP1 then catalyzes the transcription of fully conservative plus-strand genomic RNAs that are extruded through the DLP's channels into the cytoplasm where they function as mRNAs for translation of viral proteins. One copy of each of the viral (+)RNAs is also recruited during core assembly, together with newly synthesized polymerase complexes and VP2. The polymerase of these novo-formed particles catalyzes the synthesis of complementary minus-strands leading to dsRNA formation. To do so, the polymerase specifically recognizes and binds 4 bases 5'-UGUG-3' in the conserved 3'-sequence of plus-strand RNA templates. VP2 presumably activates the autoinhibited VP1-RNA complex to coordinate packaging and genome replication. Once dsRNA synthesis is complete, the polymerase switches to the transcriptional mode, thus providing secondary transcription. This Homo sapiens (Human) protein is RNA-directed RNA polymerase.